A 113-amino-acid chain; its full sequence is UPF0102 protein CHU_0465 (113 aa).

It belongs to the UPF0102 family.

This chain is UPF0102 protein CHU_0465, found in Cytophaga hutchinsonii (strain ATCC 33406 / DSM 1761 / CIP 103989 / NBRC 15051 / NCIMB 9469 / D465).